We begin with the raw amino-acid sequence, 57 residues long: Potassium channel toxin alpha-KTx 8.7 (57 aa).

The first 28 residues, 1–28, serve as a signal peptide directing secretion; that stretch reads MSRLYAIILIALVFNVIMTIMPDMKVEA. 3 cysteine pairs are disulfide-bonded: Cys31-Cys47, Cys34-Cys52, and Cys38-Cys54.

Expressed by the venom gland.

The protein localises to the secreted. Inhibits voltage-gated potassium channel rKv1.1/KCNA1 at nanomolar ranges (IC(50)=8.5 nM). In Mesobuthus eupeus (Lesser Asian scorpion), this protein is Potassium channel toxin alpha-KTx 8.7.